The primary structure comprises 323 residues: MGNTVAREDFEWVYTDQPHADRRKEILAKHPEIKALMKPDYNLIWVVMLMVAAQLTAFYLVRDLDWKWVVFWAYVFGSCISHSMTLAIHEISHNSAFGNGRAMWNRWFGIFANLPLGLPYSISFKRYHMDHHRYLGGDGIDVDIPTNFEGWFFCTRFRKFIWIVLQPFFYAIRPLCINPKPITRLEIINLLAQLFFDIVIYYLWGAKSIFYMLAGSVLGLGLHPISGHFIAEHYMFLKGHETYSYYGPLNLLTFNVGYHNEHHDFPNIPGKSLPLVKKIAAEYYDNLPQYNSWIKVLYDFVMDDTISPYSRMKRQLKGEVKQD.

2 consecutive transmembrane segments (helical) span residues 41 to 61 and 68 to 88; these read YNLI…FYLV and WVVF…TLAI. Positions 89–93 match the Histidine box-1 motif; sequence HEISH. The helical transmembrane segment at 102-122 threads the bilayer; sequence AMWNRWFGIFANLPLGLPYSI. Residues 128–132 carry the Histidine box-2 motif; it reads HMDHH. Helical transmembrane passes span 159–179, 185–205, and 209–229; these read KFIW…CINP, LEII…YLWG, and IFYM…SGHF. A Histidine box-3 motif is present at residues 259 to 263; the sequence is HNEHH.

The protein belongs to the fatty acid desaturase type 1 family. DEGS subfamily. Interacts with RLBP1; the interaction increases synthesis of chromophore-precursors by DEGS1. Expressed in retina and retinal pigment epithelium by Mueller cells (at protein level).

It is found in the endoplasmic reticulum membrane. It carries out the reaction an N-acylsphinganine + 2 Fe(II)-[cytochrome b5] + O2 + 2 H(+) = an N-acylsphing-4-enine + 2 Fe(III)-[cytochrome b5] + 2 H2O. The catalysed reaction is all-trans-retinol = 11-cis-retinol. The enzyme catalyses all-trans-retinol = 9-cis-retinol. It catalyses the reaction all-trans-retinol = 13-cis-retinol. It carries out the reaction 11-cis-retinol = 13-cis-retinol. The catalysed reaction is 11-cis-retinol = 9-cis-retinol. In terms of biological role, has sphingolipid-delta-4-desaturase activity. Converts D-erythro-sphinganine to D-erythro-sphingosine (E-sphing-4-enine). Catalyzes the equilibrium isomerization of retinols. This is Sphingolipid delta(4)-desaturase DES1 (DEGS1) from Gallus gallus (Chicken).